Here is a 268-residue protein sequence, read N- to C-terminus: CCAAT/enhancer-binding protein delta (268 aa).

3 disordered regions span residues M1–T48, G97–G132, and A152–M219. Position 2 is an N-acetylserine (S2). K120 participates in a covalent cross-link: Glycyl lysine isopeptide (Lys-Gly) (interchain with G-Cter in SUMO). Positions P155–S167 are enriched in pro residues. The span at V177–N201 shows a compositional bias: basic and acidic residues. Positions S191–L254 constitute a bZIP domain. The basic motif stretch occupies residues R195 to K222. Positions L226–L254 are leucine-zipper.

Belongs to the bZIP family. C/EBP subfamily. Binds DNA as a homodimer and as a heterodimer. Can form stable heterodimers with CEBPA, CEBPB and CEBPE. Directly interacts with SPI1/PU.1; this interaction does not affect DNA-binding properties of each partner. Interacts with PRDM16.

It localises to the nucleus. Functionally, transcription activator that recognizes two different DNA motifs: the CCAAT homology common to many promoters and the enhanced core homology common to many enhancers. Important transcription factor regulating the expression of genes involved in immune and inflammatory responses. Transcriptional activator that enhances IL6 transcription alone and as heterodimer with CEBPB. This Mus musculus (Mouse) protein is CCAAT/enhancer-binding protein delta (Cebpd).